Consider the following 298-residue polypeptide: Probable mitochondrial 2-oxodicarboxylate carrier (298 aa).

The next 6 helical transmembrane spans lie at 6–26, 62–81, 105–125, 159–179, 203–223, and 267–287; these read IPFPVTFAAGAVAGISEVLTL, HRLYRGILPPILMEAPKRAL, ALSILTGSCAGFTETFVVVPF, ALYNGFEATMWRHVVWNAGYF, LIAGTIGGIFGTFLSTPFDVI, and VLRLGPGGGILLVVFNSVIEF. Solcar repeat units follow at residues 6–92, 102–188, and 197–287; these read IPFP…YSKL, SSPA…IRNS, and GEIR…VIEF.

It belongs to the mitochondrial carrier (TC 2.A.29) family.

It is found in the mitochondrion inner membrane. Transports C5-C7 oxodicarboxylates across the inner membranes of mitochondria. In Schizosaccharomyces pombe (strain 972 / ATCC 24843) (Fission yeast), this protein is Probable mitochondrial 2-oxodicarboxylate carrier.